The following is a 584-amino-acid chain: Aspartate--tRNA(Asp/Asn) ligase (584 aa).

Glutamate 173 contributes to the L-aspartate binding site. The tract at residues 197–200 (QLFK) is aspartate. Arginine 219 is an L-aspartate binding site. ATP is bound by residues 219-221 (RDE) and glutamine 228. Histidine 446 provides a ligand contact to L-aspartate. An ATP-binding site is contributed by glutamate 476. Arginine 483 is a binding site for L-aspartate. Residue 528–531 (GLDR) coordinates ATP.

Belongs to the class-II aminoacyl-tRNA synthetase family. Type 1 subfamily. Homodimer.

The protein localises to the cytoplasm. It catalyses the reaction tRNA(Asx) + L-aspartate + ATP = L-aspartyl-tRNA(Asx) + AMP + diphosphate. Functionally, aspartyl-tRNA synthetase with relaxed tRNA specificity since it is able to aspartylate not only its cognate tRNA(Asp) but also tRNA(Asn). Reaction proceeds in two steps: L-aspartate is first activated by ATP to form Asp-AMP and then transferred to the acceptor end of tRNA(Asp/Asn). This is Aspartate--tRNA(Asp/Asn) ligase from Sulfurovum sp. (strain NBC37-1).